A 68-amino-acid polypeptide reads, in one-letter code: Protein transport protein Sec61 subunit gamma (68 aa).

The Cytoplasmic portion of the chain corresponds to 1–32 (MDQVMQFVEPSRQFVKDSIRLVKRCTKPDRKE). A helical transmembrane segment spans residues 33–61 (FQKVAMATAIGFAIMGFIGFFVKLIHIPI). The Extracellular portion of the chain corresponds to 62–68 (NNIIVGG).

This sequence belongs to the SecE/SEC61-gamma family. In terms of assembly, the SEC61 channel-forming translocon complex consists of channel-forming core components SEC61A1, SEC61B and SEC61G and different auxiliary components such as SEC62 and SEC63. The SEC61 channel associates with the multi-pass translocon (MPT) complex.

Its subcellular location is the endoplasmic reticulum membrane. Component of SEC61 channel-forming translocon complex that mediates transport of signal peptide-containing precursor polypeptides across the endoplasmic reticulum (ER). Forms a ribosome receptor and a gated pore in the ER membrane, both functions required for cotranslational translocation of nascent polypeptides. The SEC61 channel is also involved in ER membrane insertion of transmembrane proteins: it mediates membrane insertion of the first few transmembrane segments of proteins, while insertion of subsequent transmembrane regions of multi-pass membrane proteins is mediated by the multi-pass translocon (MPT) complex. The polypeptide is Protein transport protein Sec61 subunit gamma (sec61g) (Harpagifer antarcticus (Antarctic spiny plunderfish)).